A 325-amino-acid polypeptide reads, in one-letter code: Pyruvate dehydrogenase E1 component subunit beta (325 aa).

Residue Glu-60 participates in thiamine diphosphate binding.

Heterodimer of an alpha and a beta chain. The cofactor is thiamine diphosphate.

Its subcellular location is the cytoplasm. It localises to the secreted. The catalysed reaction is N(6)-[(R)-lipoyl]-L-lysyl-[protein] + pyruvate + H(+) = N(6)-[(R)-S(8)-acetyldihydrolipoyl]-L-lysyl-[protein] + CO2. Its activity is regulated as follows. Activity of the E1 module is inhibited by the pyruvate dehydrogenase inhibitor PdhI. The pyruvate dehydrogenase complex catalyzes the overall conversion of pyruvate to acetyl-CoA and CO(2). It contains multiple copies of three enzymatic components: pyruvate dehydrogenase (E1), dihydrolipoamide acetyltransferase (E2) and lipoamide dehydrogenase (E3). In terms of biological role, the B.subtilis PDH complex also possesses branched-chain 2-oxoacid dehydrogenase (BCDH) activity. The polypeptide is Pyruvate dehydrogenase E1 component subunit beta (Bacillus subtilis (strain 168)).